The sequence spans 541 residues: Protein yellow (541 aa).

Residues 1–21 (MFQDKGWILVTLITLVTPSWA) form the signal peptide. N-linked (GlcNAc...) asparagine glycans are attached at residues Asn144 and Asn215. Residues 443-463 (QKPQTSWASSPPPPSRTYLPA) are disordered.

It belongs to the major royal jelly protein family.

The protein localises to the secreted. Functionally, controls the pigmentation pattern of the adult cuticle and larval mouth parts. The chain is Protein yellow (y) from Drosophila mauritiana (Fruit fly).